Here is a 185-residue protein sequence, read N- to C-terminus: Ribosome-recycling factor (185 aa).

This sequence belongs to the RRF family.

Its subcellular location is the cytoplasm. In terms of biological role, responsible for the release of ribosomes from messenger RNA at the termination of protein biosynthesis. May increase the efficiency of translation by recycling ribosomes from one round of translation to another. This chain is Ribosome-recycling factor, found in Corynebacterium efficiens (strain DSM 44549 / YS-314 / AJ 12310 / JCM 11189 / NBRC 100395).